Reading from the N-terminus, the 435-residue chain is 5-hydroxybenzimidazole synthase (435 aa).

Residues methionine 95, tyrosine 124, histidine 163, serine 186–glycine 188, asparagine 227–arginine 230, and glutamate 266 contribute to the substrate site. Zn(2+) is bound at residue histidine 270. Residue tyrosine 293 coordinates substrate. Histidine 334 is a binding site for Zn(2+). Residues cysteine 410, cysteine 413, and cysteine 417 each coordinate [4Fe-4S] cluster.

The protein belongs to the ThiC family. 5-hydroxybenzimidazole synthase subfamily. In terms of assembly, homodimer. [4Fe-4S] cluster serves as cofactor.

It carries out the reaction 5-amino-1-(5-phospho-beta-D-ribosyl)imidazole + AH2 + S-adenosyl-L-methionine = 5-hydroxybenzimidazole + 5'-deoxyadenosine + formate + L-methionine + A + NH4(+) + phosphate + 2 H(+). Its pathway is cofactor biosynthesis; adenosylcobalamin biosynthesis. Catalyzes the complex conversion of aminoimidazole ribotide (AIR) to 5-hydroxybenzimidazole (5-HBI) in a radical S-adenosyl-L-methionine (SAM)-dependent reaction. Is thus involved in the anaerobic biosynthesis of dimethylbenzimidazole (DMB), the lower axial ligand of vitamin B12 (cobalamin). The chain is 5-hydroxybenzimidazole synthase from Desulfuromonas acetoxidans (strain DSM 684 / 11070).